A 740-amino-acid chain; its full sequence is Ion-translocating oxidoreductase complex subunit C (740 aa).

2 consecutive 4Fe-4S ferredoxin-type domains span residues Gly369–Tyr397 and Lys407–Phe436. The [4Fe-4S] cluster site is built by Cys377, Cys380, Cys383, Cys387, Cys416, Cys419, Cys422, and Cys426. Disordered stretches follow at residues Lys602–Lys652, Ala664–Ala685, and Lys695–Pro714. The segment covering Gln605 to Gln615 has biased composition (low complexity).

Belongs to the 4Fe4S bacterial-type ferredoxin family. RnfC subfamily. As to quaternary structure, the complex is composed of six subunits: RsxA, RsxB, RsxC, RsxD, RsxE and RsxG. [4Fe-4S] cluster is required as a cofactor.

The protein localises to the cell inner membrane. Its function is as follows. Part of a membrane-bound complex that couples electron transfer with translocation of ions across the membrane. Required to maintain the reduced state of SoxR. The sequence is that of Ion-translocating oxidoreductase complex subunit C from Escherichia coli O157:H7.